The primary structure comprises 681 residues: DNA ligase (681 aa).

NAD(+)-binding positions include 35 to 39, 84 to 85, and Glu-121; these read DAEYD and SI. Catalysis depends on Lys-123, which acts as the N6-AMP-lysine intermediate. NAD(+)-binding residues include Arg-144, Glu-180, Lys-300, and Lys-324. The Zn(2+) site is built by Cys-418, Cys-421, Cys-436, and Cys-442. In terms of domain architecture, BRCT spans 601–681; sequence AADGPASGKT…GLRRLLEQPA (81 aa).

The protein belongs to the NAD-dependent DNA ligase family. LigA subfamily. Requires Mg(2+) as cofactor. It depends on Mn(2+) as a cofactor.

The catalysed reaction is NAD(+) + (deoxyribonucleotide)n-3'-hydroxyl + 5'-phospho-(deoxyribonucleotide)m = (deoxyribonucleotide)n+m + AMP + beta-nicotinamide D-nucleotide.. Functionally, DNA ligase that catalyzes the formation of phosphodiester linkages between 5'-phosphoryl and 3'-hydroxyl groups in double-stranded DNA using NAD as a coenzyme and as the energy source for the reaction. It is essential for DNA replication and repair of damaged DNA. This is DNA ligase from Aromatoleum aromaticum (strain DSM 19018 / LMG 30748 / EbN1) (Azoarcus sp. (strain EbN1)).